We begin with the raw amino-acid sequence, 192 residues long: Small ribosomal subunit protein uS5 (192 aa).

The region spanning 20-83 (FVDKLVHINR…EAAKRGLIRV (64 aa)) is the S5 DRBM domain. The tract at residues 162 to 192 (SVAARRGLKVSALQARRRDADPADTSEAAVA) is disordered.

This sequence belongs to the universal ribosomal protein uS5 family. Part of the 30S ribosomal subunit. Contacts proteins S4 and S8.

Functionally, with S4 and S12 plays an important role in translational accuracy. Located at the back of the 30S subunit body where it stabilizes the conformation of the head with respect to the body. In Methylorubrum extorquens (strain CM4 / NCIMB 13688) (Methylobacterium extorquens), this protein is Small ribosomal subunit protein uS5.